The following is a 340-amino-acid chain: 4-dimethylallyltryptophan N-methyltransferase easF (340 aa).

This sequence belongs to the methyltransferase superfamily. Homodimer.

The catalysed reaction is 4-(3-methylbut-2-enyl)-L-tryptophan + S-adenosyl-L-methionine = 4-(3-methylbut-2-enyl)-L-abrine + S-adenosyl-L-homocysteine + H(+). Its pathway is alkaloid biosynthesis; ergot alkaloid biosynthesis. Functionally, 4-dimethylallyltryptophan N-methyltransferase; part of the gene cluster that mediates the biosynthesis of fungal ergot alkaloid. DmaW catalyzes the first step of ergot alkaloid biosynthesis by condensing dimethylallyl diphosphate (DMAP) and tryptophan to form 4-dimethylallyl-L-tryptophan. The second step is catalyzed by the methyltransferase easF that methylates 4-dimethylallyl-L-tryptophan in the presence of S-adenosyl-L-methionine, resulting in the formation of 4-dimethylallyl-L-abrine. The catalase easC and the FAD-dependent oxidoreductase easE then transform 4-dimethylallyl-L-abrine to chanoclavine-I which is further oxidized by easD in the presence of NAD(+), resulting in the formation of chanoclavine-I aldehyde. Chanoclavine-I aldehyde is the precursor of ergoamides and ergopeptines in Clavicipitaceae, and clavine-type alcaloids such as fumiclavine in Trichocomaceae. However, the metabolites downstream of chanoclavine-I aldehyde in Arthrodermataceae have not been identified yet. This chain is 4-dimethylallyltryptophan N-methyltransferase easF, found in Trichophyton verrucosum (strain HKI 0517).